A 350-amino-acid chain; its full sequence is Peroxidase 24 (350 aa).

An N-terminal signal peptide occupies residues 1 to 27 (MANKSLEIRFLFPLVLFLVVKLLCVDG). 4 disulfides stabilise this stretch: Cys-55-Cys-135, Cys-88-Cys-93, Cys-141-Cys-346, and Cys-221-Cys-253. Asn-73 carries an N-linked (GlcNAc...) asparagine glycan. His-86 serves as the catalytic Proton acceptor. Positions 87, 90, 92, 94, and 96 each coordinate Ca(2+). Pro-184 contributes to the substrate binding site. Asn-189 carries N-linked (GlcNAc...) asparagine glycosylation. His-214 lines the heme b pocket. Ca(2+) is bound at residue Thr-215. A glycan (N-linked (GlcNAc...) asparagine) is linked at Asn-230. Ca(2+) contacts are provided by Asp-269 and Asp-277.

Belongs to the peroxidase family. Classical plant (class III) peroxidase subfamily. The cofactor is heme b. Requires Ca(2+) as cofactor.

Its subcellular location is the secreted. The enzyme catalyses 2 a phenolic donor + H2O2 = 2 a phenolic radical donor + 2 H2O. Functionally, removal of H(2)O(2), oxidation of toxic reductants, biosynthesis and degradation of lignin, suberization, auxin catabolism, response to environmental stresses such as wounding, pathogen attack and oxidative stress. These functions might be dependent on each isozyme/isoform in each plant tissue. The polypeptide is Peroxidase 24 (PER24) (Arabidopsis thaliana (Mouse-ear cress)).